The primary structure comprises 350 residues: UDP-3-O-acylglucosamine N-acyltransferase (350 aa).

Residue H240 is the Proton acceptor of the active site.

This sequence belongs to the transferase hexapeptide repeat family. LpxD subfamily. In terms of assembly, homotrimer.

The catalysed reaction is a UDP-3-O-[(3R)-3-hydroxyacyl]-alpha-D-glucosamine + a (3R)-hydroxyacyl-[ACP] = a UDP-2-N,3-O-bis[(3R)-3-hydroxyacyl]-alpha-D-glucosamine + holo-[ACP] + H(+). It functions in the pathway bacterial outer membrane biogenesis; LPS lipid A biosynthesis. Its function is as follows. Catalyzes the N-acylation of UDP-3-O-acylglucosamine using 3-hydroxyacyl-ACP as the acyl donor. Is involved in the biosynthesis of lipid A, a phosphorylated glycolipid that anchors the lipopolysaccharide to the outer membrane of the cell. The polypeptide is UDP-3-O-acylglucosamine N-acyltransferase (Methylobacillus flagellatus (strain ATCC 51484 / DSM 6875 / VKM B-1610 / KT)).